A 161-amino-acid polypeptide reads, in one-letter code: Large ribosomal subunit protein eL21 (161 aa).

The protein belongs to the eukaryotic ribosomal protein eL21 family.

This chain is Large ribosomal subunit protein eL21 (RPL21), found in Cyanophora paradoxa.